We begin with the raw amino-acid sequence, 290 residues long: MNVSKIAVFGLGVMGSPMAQNLVKNGYQTVGYNRTLERPSVQEAAKAGVKVVTSIAVAAANADIILTCVGDEKDVQQLILGSGGIAEYAKPQALIIDCSTIGKTAAYELATNLKLQGLRFLDAPVTGGDVGAINGTLTIMVGGDISDFEEALPVLKSIGEKIVHCGPSGSGQAVKLCNQVLCGIHAIAAAEAIQLSEQLGIAPELVIDTCGSGAAGSWALTNLAPKMSEADFAPGFMVKHLLKDLRLVREAAENGPLPGVTLAESLFTSVQLLGGEDQGSQAIIRAYREA.

NAD(+)-binding positions include 7–21 (AVFGLGVMGSPMAQN) and Thr-100. The active site involves Lys-175. Residue Lys-243 coordinates NAD(+).

The protein belongs to the HIBADH-related family.

This is an uncharacterized protein from Synechocystis sp. (strain ATCC 27184 / PCC 6803 / Kazusa).